A 303-amino-acid chain; its full sequence is N-acetyl-D-glucosamine kinase (303 aa).

ATP contacts are provided by residues 4–11 and 133–140; these read GFDIGGTK and GVGGGLVL. Residues histidine 157, cysteine 177, cysteine 179, and cysteine 184 each contribute to the Zn(2+) site.

The protein belongs to the ROK (NagC/XylR) family. NagK subfamily.

The enzyme catalyses N-acetyl-D-glucosamine + ATP = N-acetyl-D-glucosamine 6-phosphate + ADP + H(+). The protein operates within cell wall biogenesis; peptidoglycan recycling. Its function is as follows. Catalyzes the phosphorylation of N-acetyl-D-glucosamine (GlcNAc) derived from cell-wall degradation, yielding GlcNAc-6-P. This chain is N-acetyl-D-glucosamine kinase, found in Citrobacter koseri (strain ATCC BAA-895 / CDC 4225-83 / SGSC4696).